Consider the following 429-residue polypeptide: Fez family zinc finger protein 1 (429 aa).

The Engrailed homology 1 repressor motif lies at 29–44 (PLAFSIERIMARTPEP). 6 C2H2-type zinc fingers span residues 247–269 (FTCE…MPVH), 275–297 (FVCK…KIIH), 303–325 (HKCN…TRIH), 331–353 (FICE…KLTH), 359–381 (FKCN…MHTH), and 387–410 (FTCP…RKLH). Positions 409–429 (LHDISPGPHSPPTPTGNTEGQ) are disordered.

The protein belongs to the krueppel C2H2-type zinc-finger protein family.

Its subcellular location is the nucleus. Functionally, transcription repressor. Involved in the development of the forebrain region. The chain is Fez family zinc finger protein 1 (fezf1) from Danio rerio (Zebrafish).